A 574-amino-acid polypeptide reads, in one-letter code: Developmental and secondary metabolism regulator veA (574 aa).

4 disordered regions span residues 1–22 (MATR…SRIT), 39–60 (ERAR…VDPP), 255–500 (RSSD…GAGK), and 513–548 (RSYE…GRNF). One can recognise a Velvet domain in the interval 25-230 (GKKLTYKLNV…AEQGCRVRIR (206 aa)). The Nuclear localization signal signature appears at 39–44 (ERARAC). Composition is skewed to pro residues over residues 314–323 (RPMPPAPVPA) and 330–341 (PAPPAPPAPPSH). 4 stretches are compositionally biased toward polar residues: residues 343 to 359 (PGYQ…TQYP), 385 to 394 (HARNPSTSAE), 402 to 415 (YPSS…SSYP), and 448 to 458 (VAQSAGPRSQT). The interval 457-501 (QTPSSSLVPSLPPLKALSGDYPNNLSQPSSSISQSPSHDLGAGKK) is PEST. 2 stretches are compositionally biased toward low complexity: residues 459–474 (PSSS…KALS) and 482–493 (SQPSSSISQSPS). 2 stretches are compositionally biased toward basic and acidic residues: residues 513 to 525 (RSYE…DDRP) and 532 to 543 (PDTESHPRRLSD).

It belongs to the velvet family. VeA subfamily. Component of the heterotrimeric velvet complex composed of laeA, veA and velB; VeA acting as a bridging protein between laeA and velB.

It is found in the nucleus. The protein resides in the cytoplasm. Its function is as follows. Component of the velvet transcription factor complex that controls sexual/asexual developmental ratio in response to light, promoting sexual development in the darkness while stimulating asexual sporulation under illumination. The velvet complex hat acts as a global regulator for secondary metabolite gene expression. Controls the expression of the aflatoxin gene cluster. Required for the expression of aflR and aflJ. Mediates the coordination of aflatoxigenic vesicles (aflatoxisomes) development with aflatoxin gene expression. Regulates branched chain amino acid and ethanol metabolism and acts as a positive regulator of mitochondrial and peroxisomal beta-oxidation. The protein is Developmental and secondary metabolism regulator veA of Aspergillus parasiticus.